A 294-amino-acid polypeptide reads, in one-letter code: Probable 2-(5''-triphosphoribosyl)-3'-dephosphocoenzyme-A synthase (294 aa).

This sequence belongs to the CitG/MdcB family.

The catalysed reaction is 3'-dephospho-CoA + ATP = 2'-(5''-triphospho-alpha-D-ribosyl)-3'-dephospho-CoA + adenine. This Streptococcus equi subsp. equi (strain 4047) protein is Probable 2-(5''-triphosphoribosyl)-3'-dephosphocoenzyme-A synthase.